Here is a 438-residue protein sequence, read N- to C-terminus: Ribosomal protein uS12 methylthiotransferase RimO (438 aa).

In terms of domain architecture, MTTase N-terminal spans 1–115 (MKYFILSLGC…LDKLLADLGE (115 aa)). Residues C10, C46, C78, C150, C154, and C157 each contribute to the [4Fe-4S] cluster site. The 231-residue stretch at 136 to 366 (KSNEVYRYIK…MEVQQEISLN (231 aa)) folds into the Radical SAM core domain. Positions 369 to 437 (KALVGKKIPV…IYDLKGEFIN (69 aa)) constitute a TRAM domain.

The protein belongs to the methylthiotransferase family. RimO subfamily. It depends on [4Fe-4S] cluster as a cofactor.

Its subcellular location is the cytoplasm. It catalyses the reaction L-aspartate(89)-[ribosomal protein uS12]-hydrogen + (sulfur carrier)-SH + AH2 + 2 S-adenosyl-L-methionine = 3-methylsulfanyl-L-aspartate(89)-[ribosomal protein uS12]-hydrogen + (sulfur carrier)-H + 5'-deoxyadenosine + L-methionine + A + S-adenosyl-L-homocysteine + 2 H(+). In terms of biological role, catalyzes the methylthiolation of an aspartic acid residue of ribosomal protein uS12. The polypeptide is Ribosomal protein uS12 methylthiotransferase RimO (Carboxydothermus hydrogenoformans (strain ATCC BAA-161 / DSM 6008 / Z-2901)).